An 89-amino-acid polypeptide reads, in one-letter code: Small ribosomal subunit protein uS14 (89 aa).

The protein belongs to the universal ribosomal protein uS14 family. In terms of assembly, part of the 30S ribosomal subunit. Contacts proteins S3 and S10.

In terms of biological role, binds 16S rRNA, required for the assembly of 30S particles and may also be responsible for determining the conformation of the 16S rRNA at the A site. The sequence is that of Small ribosomal subunit protein uS14 from Pelodictyon phaeoclathratiforme (strain DSM 5477 / BU-1).